The chain runs to 498 residues: Glycerol kinase (498 aa).

Thr-12 provides a ligand contact to ADP. Residues Thr-12, Thr-13, and Ser-14 each contribute to the ATP site. Thr-12 contacts sn-glycerol 3-phosphate. Arg-16 lines the ADP pocket. Sn-glycerol 3-phosphate is bound by residues Arg-82, Glu-83, Tyr-134, and Asp-243. Glycerol is bound by residues Arg-82, Glu-83, Tyr-134, Asp-243, and Gln-244. Thr-265 and Gly-308 together coordinate ADP. Residues Thr-265, Gly-308, Gln-312, and Gly-409 each contribute to the ATP site. ADP contacts are provided by Gly-409 and Asn-413.

The protein belongs to the FGGY kinase family. As to quaternary structure, homotetramer and homodimer (in equilibrium).

It catalyses the reaction glycerol + ATP = sn-glycerol 3-phosphate + ADP + H(+). It participates in polyol metabolism; glycerol degradation via glycerol kinase pathway; sn-glycerol 3-phosphate from glycerol: step 1/1. With respect to regulation, activated by phosphorylation and inhibited by fructose 1,6-bisphosphate (FBP). Its function is as follows. Key enzyme in the regulation of glycerol uptake and metabolism. Catalyzes the phosphorylation of glycerol to yield sn-glycerol 3-phosphate. In Clostridium botulinum (strain ATCC 19397 / Type A), this protein is Glycerol kinase.